Consider the following 739-residue polypeptide: Phosphoribosylformylglycinamidine synthase subunit PurL (739 aa).

Histidine 54 is a catalytic residue. ATP-binding residues include tyrosine 57 and lysine 96. Residue glutamate 98 coordinates Mg(2+). Substrate-binding positions include serine 99 to histidine 102 and arginine 121. Residue histidine 100 is the Proton acceptor of the active site. A Mg(2+)-binding site is contributed by aspartate 122. Glutamine 245 contributes to the substrate binding site. A Mg(2+)-binding site is contributed by aspartate 273. Glutamate 317 to glutamine 319 contributes to the substrate binding site. ATP is bound by residues aspartate 500 and glycine 537. Residue asparagine 538 participates in Mg(2+) binding. Serine 540 lines the substrate pocket.

Belongs to the FGAMS family. In terms of assembly, monomer. Part of the FGAM synthase complex composed of 1 PurL, 1 PurQ and 2 PurS subunits.

Its subcellular location is the cytoplasm. The catalysed reaction is N(2)-formyl-N(1)-(5-phospho-beta-D-ribosyl)glycinamide + L-glutamine + ATP + H2O = 2-formamido-N(1)-(5-O-phospho-beta-D-ribosyl)acetamidine + L-glutamate + ADP + phosphate + H(+). It functions in the pathway purine metabolism; IMP biosynthesis via de novo pathway; 5-amino-1-(5-phospho-D-ribosyl)imidazole from N(2)-formyl-N(1)-(5-phospho-D-ribosyl)glycinamide: step 1/2. Functionally, part of the phosphoribosylformylglycinamidine synthase complex involved in the purines biosynthetic pathway. Catalyzes the ATP-dependent conversion of formylglycinamide ribonucleotide (FGAR) and glutamine to yield formylglycinamidine ribonucleotide (FGAM) and glutamate. The FGAM synthase complex is composed of three subunits. PurQ produces an ammonia molecule by converting glutamine to glutamate. PurL transfers the ammonia molecule to FGAR to form FGAM in an ATP-dependent manner. PurS interacts with PurQ and PurL and is thought to assist in the transfer of the ammonia molecule from PurQ to PurL. This chain is Phosphoribosylformylglycinamidine synthase subunit PurL, found in Bacillus cereus (strain ZK / E33L).